The sequence spans 63 residues: Beta-defensin 3 (63 aa).

The first 20 residues, 1–20 (MRIHYLLFSFLLVLLSPLSA), serve as a signal peptide directing secretion. A propeptide spanning residues 21–22 (FS) is cleaved from the precursor. Disulfide bonds link C31/C59, C38/C52, and C42/C60.

It belongs to the beta-defensin family.

The protein localises to the secreted. Functionally, has bactericidal activity. The chain is Beta-defensin 3 (Defb3) from Rattus norvegicus (Rat).